The following is a 447-amino-acid chain: MNAWEVNFDGLVGLTHHYAGLSFGNEASTRHCFQVSNPRLAAKQGLLKMKTLADAGFPQAVIPPHERPFIPVLRQLGFSGSDEQVLEKVARQAPHWLSSASSASPMWVANAATIAPSADTLDGKVHLTVANLNNKFHRSLEAPVTESLLKAIFNDEEKFSVHSALPQVALLGDEGAANHNRLGGHYGEPGIQLFVYGREEGNDTRPSRYPARQTREASEAVARLNQVNPQQVIFAQQNPDVIDQGVFHNDVIAVSNRQVLFCHQQAFARQSQLLANLRSRVNGFMAIEVPAAQVSVSDAVSTYLFNSQLLSRDDGSMMLVLPQECREHAGVWRYLNELLAADNPISSLKVFDLRESMANGGGPACLRLRVVLTEEERRAVNPAVMMNDTLFNALNDWVDRYYRDRLTAADLADPQLLREGREALDTLTQLLDLGSVYPFQREGGGNG.

Substrate contacts are provided by residues 19-28 (AGLSFGNEAS), Asn-110, and 137-138 (HR). Residue Glu-174 is part of the active site. Substrate is bound at residue Arg-212. His-248 is an active-site residue. The substrate site is built by Asp-250 and Asn-359. Residue Cys-365 is the Nucleophile of the active site.

The protein belongs to the succinylarginine dihydrolase family. As to quaternary structure, homodimer.

The enzyme catalyses N(2)-succinyl-L-arginine + 2 H2O + 2 H(+) = N(2)-succinyl-L-ornithine + 2 NH4(+) + CO2. The protein operates within amino-acid degradation; L-arginine degradation via AST pathway; L-glutamate and succinate from L-arginine: step 2/5. Its function is as follows. Catalyzes the hydrolysis of N(2)-succinylarginine into N(2)-succinylornithine, ammonia and CO(2). The protein is N-succinylarginine dihydrolase of Escherichia coli O6:K15:H31 (strain 536 / UPEC).